We begin with the raw amino-acid sequence, 321 residues long: Annexin B10 (321 aa).

Annexin repeat units lie at residues 15-86 (FDAS…GLMM), 87-158 (PPVE…LIVT), 171-243 (GQAK…AIVE), and 247-319 (SPAA…ALLG).

This sequence belongs to the annexin family.

The sequence is that of Annexin B10 (AnxB10) from Drosophila melanogaster (Fruit fly).